A 194-amino-acid polypeptide reads, in one-letter code: Fibroblast growth factor 7 (194 aa).

Residues 1–31 form the signal peptide; that stretch reads MRKWILTWILPTLLYRSCFHIICLVGTISLA. An N-linked (GlcNAc...) asparagine glycan is attached at asparagine 45.

Belongs to the heparin-binding growth factors family. Interacts with FGFBP1. Interacts with FGFR2. Affinity between fibroblast growth factors (FGFs) and their receptors is increased by heparan sulfate glycosaminoglycans that function as coreceptors.

Its subcellular location is the secreted. Functionally, plays an important role in the regulation of embryonic development, cell proliferation and cell differentiation. Required for normal branching morphogenesis. Growth factor active on keratinocytes. Possible major paracrine effector of normal epithelial cell proliferation. The sequence is that of Fibroblast growth factor 7 (FGF7) from Canis lupus familiaris (Dog).